We begin with the raw amino-acid sequence, 327 residues long: MAAYDSLMVFTGNANPELAQRVVRHLDISLGNASVSKFSDGEVAVELLENVRGRDVFILQPTCAPTNDNLMEILTMADALKRASAGRITTAIPYFGYARQDRRPRSVRVPISAKLVANMLYSAGIDRVLTVDLHADQIQGFFDIPVDNIYATPILLNDIKQQRIENLTVVSPDIGGVVRARAVAKSLNADLAIIDKRRPKANVAEVMNIIGDIQGRTCLIVDDMIDTANTLCKAAVALKERGAERVLAYASHAVFSGEAVSRIASSEIDQVVVTDTIPLSEAAKNCDRIRQVTIAGLLAETVRRISNEESVSYLFNEEVMTGSMLLP.

ATP-binding positions include 40–42 (DGE) and 99–100 (RQ). The Mg(2+) site is built by His134 and Asp173. Lys196 is a catalytic residue. D-ribose 5-phosphate-binding positions include Arg198, Asp222, and 226–230 (DTANT).

The protein belongs to the ribose-phosphate pyrophosphokinase family. Class I subfamily. Homohexamer. The cofactor is Mg(2+).

The protein localises to the cytoplasm. The catalysed reaction is D-ribose 5-phosphate + ATP = 5-phospho-alpha-D-ribose 1-diphosphate + AMP + H(+). The protein operates within metabolic intermediate biosynthesis; 5-phospho-alpha-D-ribose 1-diphosphate biosynthesis; 5-phospho-alpha-D-ribose 1-diphosphate from D-ribose 5-phosphate (route I): step 1/1. Its function is as follows. Involved in the biosynthesis of the central metabolite phospho-alpha-D-ribosyl-1-pyrophosphate (PRPP) via the transfer of pyrophosphoryl group from ATP to 1-hydroxyl of ribose-5-phosphate (Rib-5-P). The protein is Ribose-phosphate pyrophosphokinase of Neisseria meningitidis serogroup A / serotype 4A (strain DSM 15465 / Z2491).